Here is a 420-residue protein sequence, read N- to C-terminus: Acetyl-CoA acetyltransferase B, mitochondrial (420 aa).

A mitochondrion-targeting transit peptide spans Met-1–Asn-33. Catalysis depends on Cys-119, which acts as the Acyl-thioester intermediate. CoA contacts are provided by residues Tyr-212, Arg-251–Asp-253, and Lys-256. A K(+)-binding site is contributed by Tyr-212. K(+) contacts are provided by Ala-273 and Ala-274. Ser-277 contacts CoA. Val-374 is a binding site for K(+). Catalysis depends on Cys-406, which acts as the Proton donor/acceptor.

It belongs to the thiolase-like superfamily. Thiolase family. Homotetramer.

Its subcellular location is the mitochondrion. It catalyses the reaction 2 acetyl-CoA = acetoacetyl-CoA + CoA. The catalysed reaction is propanoyl-CoA + acetyl-CoA = 2-methyl-3-oxobutanoyl-CoA + CoA. It functions in the pathway lipid metabolism; fatty acid beta-oxidation. Its function is as follows. This is one of the enzymes that catalyzes the last step of the mitochondrial beta-oxidation pathway, an aerobic process breaking down fatty acids into acetyl-CoA. Using free coenzyme A/CoA, catalyzes the thiolytic cleavage of medium- to long-chain 3-oxoacyl-CoAs into acetyl-CoA and a fatty acyl-CoA shortened by two carbon atoms. The activity of the enzyme is reversible and it can also catalyze the condensation of two acetyl-CoA molecules into acetoacetyl-CoA. Thereby, it plays a major role in ketone body metabolism. This is Acetyl-CoA acetyltransferase B, mitochondrial (acat1-b) from Xenopus laevis (African clawed frog).